We begin with the raw amino-acid sequence, 78 residues long: Putative gastrointestinal growth factor xP1 (78 aa).

A signal peptide spans 1 to 23 (MNYKVFCLVAIALIVGSIGSANG). The region spanning 30–73 (EQCSVERLARVNCGYSGITPQECTKQGCCFDSTIQDAPWCFYPR) is the P-type domain. 3 disulfide bridges follow: Cys-32-Cys-58, Cys-42-Cys-57, and Cys-52-Cys-69.

In terms of tissue distribution, stomach mucosa.

It is found in the secreted. Functionally, may act as a growth factor. This is Putative gastrointestinal growth factor xP1 (p1) from Xenopus laevis (African clawed frog).